The chain runs to 190 residues: Elongation factor P-like protein (190 aa).

Belongs to the elongation factor P family.

This Klebsiella pneumoniae (strain 342) protein is Elongation factor P-like protein.